The chain runs to 254 residues: MLLCLLYFTSSWCSGSDVPDVCTNSGMIAINFVDGPVRGVTDRILNTLDELGVKATFSFTVNQKAVGNVGQLYRRAVEEGHNVALRVDPSMDEGYQCLSQDALENNVDREIDTIDGLSGTEIRYAAVPICNGQVNSEMYNILTERGVLPVGYTFCPYDYDDPVGEFESMIEGSDPKHHSFIILMHDGQEADTSRLENMVKIGKDKGYRFVNMDECLQGYKGAPGDPELSLRGKGVESIGKGFLPFFLMMLVRLL.

The region spanning 26-210 (GMIAINFVDG…IGKDKGYRFV (185 aa)) is the NodB homology domain.

The chain is Polysaccharide deacetylase domain-containing protein ECU11_0510 from Encephalitozoon cuniculi (strain GB-M1) (Microsporidian parasite).